We begin with the raw amino-acid sequence, 178 residues long: Large ribosomal subunit protein eL20w (178 aa).

It belongs to the eukaryotic ribosomal protein eL20 family.

This Arabidopsis thaliana (Mouse-ear cress) protein is Large ribosomal subunit protein eL20w (RPL18AD).